The chain runs to 244 residues: 2,5-diamino-6-ribosylamino-4(3H)-pyrimidinone 5'-phosphate reductase (244 aa).

Residues Thr-79, Asp-83, Val-159, and 182-186 contribute to the NADP(+) site; that span reads GANVI.

It belongs to the HTP reductase family. In terms of assembly, homodimer.

It catalyses the reaction 2,5-diamino-6-(1-D-ribitylamino)pyrimidin-4(3H)-one 5'-phosphate + NADP(+) = 2,5-diamino-6-(1-D-ribosylamino)pyrimidin-4(3H)-one 5'-phosphate + NADPH + H(+). The enzyme catalyses 2,5-diamino-6-(1-D-ribitylamino)pyrimidin-4(3H)-one 5'-phosphate + NAD(+) = 2,5-diamino-6-(1-D-ribosylamino)pyrimidin-4(3H)-one 5'-phosphate + NADH + H(+). It functions in the pathway cofactor biosynthesis; riboflavin biosynthesis. In terms of biological role, catalyzes an early step in riboflavin biosynthesis, the NADPH-dependent reduction of the ribose side chain of 2,5-diamino-6-ribosylamino-4(3H)-pyrimidinone 5'-phosphate, yielding 2,5-diamino-6-ribitylamino-4(3H)-pyrimidinone 5'-phosphate. The polypeptide is 2,5-diamino-6-ribosylamino-4(3H)-pyrimidinone 5'-phosphate reductase (RIB7) (Saccharomyces cerevisiae (strain ATCC 204508 / S288c) (Baker's yeast)).